We begin with the raw amino-acid sequence, 314 residues long: MTSQKLSLQDIILTLQQYWANQGANLMQAYDNEVGAGTQSPYTFLRANGPEPWHAAYVQPSRRPADGRYGDNPNRLFQHHQFQVVMKPSPDNIQELYLGSLEALGIKPLEHDIRFVEDNWENPSMGAAGIGWEVWLDGMEVTQFTYFQQVGGIEVDSVTAEVTYGLERLASYIQDVPTVYDLDWGNGVLYGDIFKEPEYEHSKYAFEASDQAMLLRHFDDFEKEATRLLDLGLVHPAYDYILKSSHTFNLLDASGSVSVTERAGYLHRIRTMARRVSKVFIDERAKLGFPLLKDDDLREIYLGEHGKYTLTEEN.

It belongs to the class-II aminoacyl-tRNA synthetase family. Tetramer of two alpha and two beta subunits.

The protein resides in the cytoplasm. The enzyme catalyses tRNA(Gly) + glycine + ATP = glycyl-tRNA(Gly) + AMP + diphosphate. The polypeptide is Glycine--tRNA ligase alpha subunit (Leuconostoc citreum (strain KM20)).